The following is a 179-amino-acid chain: Large ribosomal subunit protein uL5 (179 aa).

It belongs to the universal ribosomal protein uL5 family. In terms of assembly, part of the 50S ribosomal subunit; part of the 5S rRNA/L5/L18/L25 subcomplex. Contacts the 5S rRNA and the P site tRNA. Forms a bridge to the 30S subunit in the 70S ribosome.

Its function is as follows. This is one of the proteins that bind and probably mediate the attachment of the 5S RNA into the large ribosomal subunit, where it forms part of the central protuberance. In the 70S ribosome it contacts protein S13 of the 30S subunit (bridge B1b), connecting the 2 subunits; this bridge is implicated in subunit movement. Contacts the P site tRNA; the 5S rRNA and some of its associated proteins might help stabilize positioning of ribosome-bound tRNAs. The protein is Large ribosomal subunit protein uL5 of Shewanella sp. (strain ANA-3).